A 1261-amino-acid polypeptide reads, in one-letter code: MVYTKAWFLQNIARQTLGKNVAVHRPPLKLGNMTNWIQQQQAQTNLSLSNTKAPGSLDERLFLTEDDIIFHDRSIQLGYFDPSLSERKQSPPGKSLHRFVDNLNPNSSHFSASLLPASLSSLCDSTCGDVDDEQQFNSLATSPLSTETQSEVSDPLLDTLTPNSLESSFASISLNSFTSANEFIQFLKRLASSKLSIHTFDLYKLVRNSPELLTLEAYNIVLQCMSTDDYFLSSSKNIQKIIKVYVDMLNSFISPNVTTFETVIFALCRRAKFVHQKIESLSKRTIYAHPSIAKEIQPELLDLQSEMPLQTAVFMFTSSLINHDLIYSPQFYAILIESVSLYGTQSQLDSLLECVPLGTIEANGHPDLLPALIRALGRAKRLNSCFQLLERYNLSDPTSDTSMTNVRSWEGLMEAYFDTDHHVEASALMKSFFRKADSNQVIPSSILDCFLRRLAQLGHYKESAEWLGMAIEKISTYKASPSTLSSILEAACLNNNDKFAIAFVRKYTLSRFSDCHAVLLRYLDLLARSGNVDLLHLHAYPVICSVSSHTNFTFSNVYKAFIENGKIDVALRLLRKHIDPKVSLGNNTAPSSNSVALQLSILNGFWEVLTEELQKDVHVLLSLVSTLENQVNFPQVDFTTPLLRHITGYLVSRRLEPELISPRVFGFLLEYAAFNVVQTEGTFTSKVILTDLLKCYSNGTYKASFKNVHVVLRSFTYLKEDEMLVASVRDDIVSEAVVGFSTDNNGQKILADISQVCYCLDDLECIDQSINSLVSKMLTSASPEQVDVNILFFQFGKLIETNKFLHPEVYPTLISVLSKNKRFDAVQRVFEHSKHLYRKISTKSLEKANWFMALILDAMILSSSFARQFKSSNLFCDNMKMLGYIPRASTFAHLINNSTRRGDTDDATTALNIFEETKRHNVKPSVFLYNAVLSKLGRARRTTECWKLFQEMKESGLLPTSVTYGTVINAACRIGDESLAEKLFAEMENQPNYQPRVAPYNTMIQFEVQTMFNREKALFYYNRLCATDIEPSSHTYKLLMDAYGTLKPVNVGSVKAVLELMERTDVPILSMHYAAYIHILGNVVSDVQAATSCYMNALAKHDAGEIQLDANLFQSQIESLIANDRIVEGIQIVSDMKRYNVSLNAYIVNALIKGFTKVGMISKARYYFDLLECEGMSGKEPSTYENMVRAYLSVNDGRKAMEIVEQLKRKRYPLPVVNRISSLVNSHMGQKPKRRSLNTSHSSLASLGNASTQHSINSSIN.

15 PPR repeats span residues 365-404, 405-442, 443-479, 480-514, 550-584, 806-849, 852-886, 887-924, 925-959, 960-995, 996-1031, 1032-1068, 1109-1143, 1144-1179, and 1180-1214; these read HPDL…TSMT, NVRS…NQVI, PSSI…TYKA, SPST…RFSD, TNFT…KVSL, HPEV…EKAN, MALI…GYIP, RAST…NVKP, SVFL…GLLP, TSVT…NYQP, RVAP…DIEP, SSHT…DVPI, DANL…NVSL, NAYI…MSGK, and EPST…RYPL. Residues 1225-1261 form a disordered region; that stretch reads NSHMGQKPKRRSLNTSHSSLASLGNASTQHSINSSIN. The span at 1237-1261 shows a compositional bias: polar residues; it reads LNTSHSSLASLGNASTQHSINSSIN.

It localises to the mitochondrion. Its function is as follows. Mitochondrial RNA-binding protein that acts as a general negative regulator of mitochondrial translation. The polypeptide is Pentatricopeptide repeat-containing protein 5, mitochondrial (ppr5) (Schizosaccharomyces pombe (strain 972 / ATCC 24843) (Fission yeast)).